A 451-amino-acid polypeptide reads, in one-letter code: E3 ubiquitin-protein ligase trul-1 (451 aa).

Residues 13 to 54 (CSICFEDLKQNDKISAIVCGHIYHHGCISQWIATKRQCPSCR) form an RING-type; atypical zinc finger. Coiled coils occupy residues 96–130 (LKVE…EKDK) and 209–243 (NKDL…DAAI). 2 disordered regions span residues 270–297 (RDVL…MIDP) and 389–442 (KIPN…SSTS). Residues 427–442 (STRISSFFSRTTSSTS) are compositionally biased toward low complexity.

The protein belongs to the TRAIP family.

It localises to the nucleus. The protein localises to the chromosome. It catalyses the reaction S-ubiquitinyl-[E2 ubiquitin-conjugating enzyme]-L-cysteine + [acceptor protein]-L-lysine = [E2 ubiquitin-conjugating enzyme]-L-cysteine + N(6)-ubiquitinyl-[acceptor protein]-L-lysine.. It participates in protein modification; protein ubiquitination. In terms of biological role, E3 ubiquitin ligase that acts as a key regulator of DNA repair in response to replication stress. Acts by mediating ubiquitination of the CMG helicase complex, promoting the unloading of the CMG helicase complex by the p97 ATPase (cdc-48.1 or cdc-48.2). This is E3 ubiquitin-protein ligase trul-1 from Caenorhabditis elegans.